Consider the following 149-residue polypeptide: Oligosaccharyltransferase complex subunit ostc-A (149 aa).

Over 1-32 (MESLYRVPFTVLECPNLKLKKPSWLHMPSAMT) the chain is Cytoplasmic. A helical membrane pass occupies residues 33–53 (VYAMVVVSYFLITGGIIYDVI). The Extracellular segment spans residues 54–83 (VEPPSVGSMTDEHGHQRPVAFLAYRVNGQY). The chain crosses the membrane as a helical span at residues 84 to 104 (IMEGLASSFLFTMGGLGFIIL). Residues 105 to 117 (DRSNTPNIPKLNR) are Cytoplasmic-facing. The helical transmembrane segment at 118-138 (FLLLFIGFVCVLLSFFMARVF) threads the bilayer. Over 139 to 149 (MRMKLPGYLMG) the chain is Extracellular.

It belongs to the OSTC family. In terms of assembly, specific component of the STT3A-containing form of the oligosaccharyltransferase (OST) complex.

It is found in the membrane. It functions in the pathway protein modification; protein glycosylation. Specific component of the STT3A-containing form of the oligosaccharyl transferase (OST) complex that catalyzes the initial transfer of a defined glycan (Glc(3)Man(9)GlcNAc(2) in eukaryotes) from the lipid carrier dolichol-pyrophosphate to an asparagine residue within an Asn-X-Ser/Thr consensus motif in nascent polypeptide chains, the first step in protein N-glycosylation. N-glycosylation occurs cotranslationally and the complex associates with the Sec61 complex at the channel-forming translocon complex that mediates protein translocation across the endoplasmic reticulum (ER). All subunits are required for a maximal enzyme activity. The chain is Oligosaccharyltransferase complex subunit ostc-A from Xenopus laevis (African clawed frog).